We begin with the raw amino-acid sequence, 503 residues long: Probable cytosol aminopeptidase (503 aa).

2 residues coordinate Mn(2+): lysine 270 and aspartate 275. Lysine 282 is a catalytic residue. Residues aspartate 293, aspartate 352, and glutamate 354 each coordinate Mn(2+). Arginine 356 is an active-site residue.

It belongs to the peptidase M17 family. Mn(2+) serves as cofactor.

It localises to the cytoplasm. The enzyme catalyses Release of an N-terminal amino acid, Xaa-|-Yaa-, in which Xaa is preferably Leu, but may be other amino acids including Pro although not Arg or Lys, and Yaa may be Pro. Amino acid amides and methyl esters are also readily hydrolyzed, but rates on arylamides are exceedingly low.. It catalyses the reaction Release of an N-terminal amino acid, preferentially leucine, but not glutamic or aspartic acids.. In terms of biological role, presumably involved in the processing and regular turnover of intracellular proteins. Catalyzes the removal of unsubstituted N-terminal amino acids from various peptides. This Enterobacter sp. (strain 638) protein is Probable cytosol aminopeptidase.